The sequence spans 279 residues: Shikimate dehydrogenase (NADP(+)) (279 aa).

Shikimate contacts are provided by residues 20–22 and Thr67; that span reads SRS. Lys71 serves as the catalytic Proton acceptor. Asp83 provides a ligand contact to NADP(+). Shikimate-binding residues include Asn92 and Asp108. NADP(+)-binding positions include 134–138 and Leu223; that span reads GAGGA. Shikimate is bound at residue Tyr225. Position 246 (Gly246) interacts with NADP(+).

This sequence belongs to the shikimate dehydrogenase family. Homodimer.

The catalysed reaction is shikimate + NADP(+) = 3-dehydroshikimate + NADPH + H(+). It participates in metabolic intermediate biosynthesis; chorismate biosynthesis; chorismate from D-erythrose 4-phosphate and phosphoenolpyruvate: step 4/7. In terms of biological role, involved in the biosynthesis of the chorismate, which leads to the biosynthesis of aromatic amino acids. Catalyzes the reversible NADPH linked reduction of 3-dehydroshikimate (DHSA) to yield shikimate (SA). This is Shikimate dehydrogenase (NADP(+)) from Cereibacter sphaeroides (strain KD131 / KCTC 12085) (Rhodobacter sphaeroides).